The following is a 3590-amino-acid chain: MNTNLYRLVFSHVRGMLVPVSEHCTVGNTFCGRTRGQARSGARATSLSVAPNALAWALMLACTGLPLVTHAQGLVPQGQTQVLQGGNKVPVVNIADPNSGGVSHNKFQQFNVANPGVVFNNGLTDGVSRIGGALTKNPNLTRQASAILAEVTDTSPSRLAGTLEVYGKGADLIIANPNGISVNGLSTLNASNLTLTTGRPSVNGGRIGLDVQQGTVTIERGGVNATGLGYFDVVARLVKLQGAVSSKQGKPLADIAVVAGANRYDHATRRATPIAAGARGAAAGAYAIDGTAAGAMYGKHITLVSSDSGLGVRQLGSLSSPSAITVSSQGEIALGDATVQRGPLSLKGAGVVSAGKLASGGGAVNVAGGGAVKIASASSVGNLAVQGGGKVQATLLNAGGTLLVSGRQAVQLGAASSRQALSVNAGGALKADKLSATRRVDVDGKQAVALGSASSNALSVRAGGALKAGKLSATGRLDVDGKQAVTLGSVASDGALSVSAGGNLRAKQLVSSAQLEVRGQREVALDDASSARGMTVVAAGALAARNLQSKGAIGVQGGEAVSVANANSDAELRVRGRGQVDLHDLSAARGADISGEGRVNIGRARSDSDVKVSAHGALSIDSMTALGAIGVQAGGSVSAKDMRSRGAVTVSGGGAVNLGDVQSDGQVRATSAGAMTVRDVAAAADLALQAGDALQAGFLKSAGAMTVNGRDAVRLDGAHAGGQLRVSSDGQAALGSLAAKGELTVSAARAATVAELKSLDNISVTGGERVSVQSVNSASRVAISAHGALDVGKVSAKSGIGLEGWGAVGADSLGSDGAISVSGRDAVRVDQARSLADISLGAEGGATLGAVEAAGSIDVRGGSTVAANSLHANRDVRVSGKDAVRVTAATSGGGLHVSSGRQLDLGAVQARGALALDGGAGVALQSAKASGTLHVQGGEHLDLGTLAAVGAVDVNGTGDVRVAKLVSDAGADLQAGRSMTLGIVDTTGDLQARAQQKLELGSVKSDGGLQAAAGGALSLAAAEVAGALELSGQGVTVDRASASRARIDSTGSVGIGALKAGAVEAASPRRARRALRQDFFTPGSVVVRAQGNVTVGRGDPHQGVLAQGDIIMDAKGGTLLLRNDALTENGTVTISADSAVLEHSTIESKISQSVLAAKGDKGKPAVSVKVAKKLFLNGTLRAVNDNNETMSGRQIDVVDGRPQITDAVTGEARKDESVVSDAALVADGGPIVVEAGELVSHAGGIGNGRNKENGASVTVRTTGNLVNKGYISAGKQGVLEVGGALTNEFLVGSDGTQRIEAQRIENRGTFQSQAPAGTAGALVVKAAEAIVHDGVMATKGEMQIAGKGGGSPTVTAGAKATTSANKLSVDVASWDNAGSLDIKKGGAQVTVAGRYAEHGEVSIQGDYTVSADAIALAAQVTQRGGAANLTSRHDTRFSNKIRLMGPLQVNAGGAVSNTGNLKVREGVTVTAASFDNETGAEVMAKSATLTTSGAARNAGKMQVKEAATIVAASVSNPGTFTAGKDITVTSRGGFDNEGKMESNKDIVIKTEQFSNGRVLDAKHDLTVTASGQADNRGSLKAGHDFTVQAQRIDNSGTMAAGHDATLKAPHLRNTGQVVAGHDIHIINSAKLENTGRVDARNDIALDVADFTNTGSLYAEHDATLTLAQGTQRDLVVDQDHILPVAEGTLRVKAKSLTTEIETGNPGSLIAEVQENIDNKQAIVVGKDLTLSSAHGNVANEANALLWAAGELTVKAQNITNKRAALIEAGGNARLTAAVALLNKLGRIRAGEDMHLDAPRIENTAKLSGEVQRKGVQDVGGGEHGRWSGIGYVNYWLRAGNGKKAGTIAAPWYGGDLTAEQSLIEVGKDLYLNAGARKDEHRHLLNEGVIQAGGHGHIGGDVDNRSVVRTVSAMEYFKTPLPVSLTALDNRAGLSPATWNFQSTYELLDYLLDQNRYEYIWGLYPTYTEWSVNTLKNLDLGYQAKPAPTAPPMPKAPELDLRGHTLESAEGRKIFGEYKKLQGEYEKAKMAVQAVEAYGEATRRVHDQLGQRYGKALGGMDAETKEVDGIIQEFAADLRTVYAKQADQATIDAETDKVAQRYKSQIDAVRLQAIQPGRVTLAKALSAALGADWRALGHSQLMQRWKDFKAGKRGAEIAFYPKEQTVLAAGAGLTLSNGAIHNGENAAQNRGRPEGLKIGAHSATSVSGSFDALRDVGLEKRLDIDDALAAVLVNPHIFTRIGAAQTSLADGAAGPALARQARQAPETDGMVDARGLGSADALASLASLDAAQGLEVSGRRNAQVADAGLAGPSAVAAPAVGAADVGVEPVTGDQVDQPVVAVGLEQPVATVRVAPPAVALPRPLFETRIKFIDQSKFYGSRYFFEQIGYKPDRAARVAGDNYFDTTLVREQVRRALGGYESRLPVRGVALVAKLMDSAGTVGKALGLKVGVAPTAQQLKQADRDFVWYVDTVIDGQKVLAPRLYLTEATRQGITDQYAGGGALIASGGDVTVNTDGHDVSSVNGLIQGRSVKVDAGKGKVVVADSKGAGGGIEADDEVDVSGRDIGIEGGKLRGKDVRLKADTVKVATSMRYDDKGRLAARGDGALDAQGGQLHIEAKRLETAGATLKGGKVKLDVDDVKLGGVYEAGSSYENKSSTPLGSLFAILSSTTETNQSAHANHYGTRIEAGTLEGKMQNLEIEGGSVDAAHTDLSVARDARFKAAADFAHAEHEKDVRQLSLGAKVGAGGYEAGFSLGSESGLEAHAGRGMTAGAEVKVGYRASHEQSSETEKSYRNANLNFGGGSVEAGNVLDIGGADINRNRYGGAAKGNAGTEEALRMRAKKVESTKYVSEQTSQSSGWSVEVASTASARSSLLTAATRLGDSVAQNVEDGREIRGELMAAQVAAEATQLVTADTAAVALSAGISADFDSSHSRSTSQNTQYLGGNLSIEATEGDATLVGAKFGGGDQVSLKAAKSVNLMAAESTFESYSESHNFHASADANLGANAVQGAVGLGLTAGMGTSHQITNETGKTYAGTSVDAANVSIDAGKDLNLSGSRVRGKHVVLDVEGDINATSKQDERNYNSSGGGWDASAGVAIQNRTLVAPVGSAGFNFNTEHDNSRLTNDGAAGVVASDGLTGHVKGDANLTGATIADLSGKGNLKVDGAVNAQNLKDYRDKDGGSGGLNVGISSTTLAPTVGVAFGRVAGEDYQAEQRATIDVGQTKDPARLQVGGGVKGTLNQDAAQATVVQRNKHWAGGGSEFSVAGKSLKKKNQVRPVETPTPDVVDGPPSRPTTPPASPQPIRATVEVSSPPPVSVATVEVVPRPKVETAQPLPPRPVAAQVVPVTPPKVEVAKVEVVPRPKVETAQPLPPRPVVAEKVTTPAVQPQLAKVETVQPVKPETTKPLPKPLPVAKVTKAPPPVVETAQPLPPVKPQKATPGPVAEVGKATVTTVQVQSAPPKPAPVAKQPAPAPKPKPKPKPKAERPKPGKTTPLSGRHVVQQQVQVLQRQASDINNTKSLPGGKLPKPVTVKLTDENGKPQTYTINRREDLMKLNGKVLSTKTTLGLEQTFRLRVEDIGGKNYRVFYETNK.

2 disordered regions span residues Gly3256–Ser3309 and Ala3417–Val3498. The span at Pro3289–Pro3299 shows a compositional bias: pro residues. A compositionally biased stretch (low complexity) spans Gln3300–Ser3309. Residues Ala3417–Lys3432 are compositionally biased toward pro residues.

The protein localises to the cell surface. In terms of biological role, evidence for a role in host-cell binding and infection. In Bordetella pertussis (strain Tohama I / ATCC BAA-589 / NCTC 13251), this protein is Filamentous hemagglutinin (fhaB).